Reading from the N-terminus, the 323-residue chain is Beta-ketoacyl-[acyl-carrier-protein] synthase III (323 aa).

Active-site residues include Cys112 and His248. Positions 249-253 are ACP-binding; sequence QANRR. Residue Asn278 is part of the active site.

Belongs to the thiolase-like superfamily. FabH family. As to quaternary structure, homodimer.

The protein resides in the cytoplasm. It carries out the reaction malonyl-[ACP] + acetyl-CoA + H(+) = 3-oxobutanoyl-[ACP] + CO2 + CoA. The protein operates within lipid metabolism; fatty acid biosynthesis. Catalyzes the condensation reaction of fatty acid synthesis by the addition to an acyl acceptor of two carbons from malonyl-ACP. Catalyzes the first condensation reaction which initiates fatty acid synthesis and may therefore play a role in governing the total rate of fatty acid production. Possesses both acetoacetyl-ACP synthase and acetyl transacylase activities. Its substrate specificity determines the biosynthesis of branched-chain and/or straight-chain of fatty acids. This Streptococcus agalactiae serotype Ia (strain ATCC 27591 / A909 / CDC SS700) protein is Beta-ketoacyl-[acyl-carrier-protein] synthase III.